Reading from the N-terminus, the 306-residue chain is UDP-3-O-acyl-N-acetylglucosamine deacetylase (306 aa).

His-79, His-239, and Asp-243 together coordinate Zn(2+). The Proton donor role is filled by His-266.

This sequence belongs to the LpxC family. It depends on Zn(2+) as a cofactor.

It catalyses the reaction a UDP-3-O-[(3R)-3-hydroxyacyl]-N-acetyl-alpha-D-glucosamine + H2O = a UDP-3-O-[(3R)-3-hydroxyacyl]-alpha-D-glucosamine + acetate. The protein operates within glycolipid biosynthesis; lipid IV(A) biosynthesis; lipid IV(A) from (3R)-3-hydroxytetradecanoyl-[acyl-carrier-protein] and UDP-N-acetyl-alpha-D-glucosamine: step 2/6. Functionally, catalyzes the hydrolysis of UDP-3-O-myristoyl-N-acetylglucosamine to form UDP-3-O-myristoylglucosamine and acetate, the committed step in lipid A biosynthesis. The polypeptide is UDP-3-O-acyl-N-acetylglucosamine deacetylase (Actinobacillus pleuropneumoniae serotype 7 (strain AP76)).